A 425-amino-acid chain; its full sequence is Pleckstrin homology domain-containing family A member 2 (425 aa).

The PH 1 domain occupies 7 to 113 (QNRICGFLDI…WVEALNQASK (107 aa)). Residue Lys-141 forms a Glycyl lysine isopeptide (Lys-Gly) (interchain with G-Cter in SUMO2) linkage. The residue at position 184 (Ser-184) is a Phosphoserine. Residues 198 to 298 (PLIKSGYCVK…WIEGIGAAVQ (101 aa)) enclose the PH 2 domain. Residues 310–331 (SRSISLTRPGSSTLTSAPNSIL) show a composition bias toward polar residues. The interval 310–425 (SRSISLTRPG…DDENIRTSDV (116 aa)) is disordered. 2 positions are modified to phosphoserine: Ser-314 and Ser-349. 2 stretches are compositionally biased toward basic and acidic residues: residues 363 to 375 (AEEK…HAPE) and 400 to 410 (RSEPQHPKEKP).

Binds MPDZ and PTPN13.

The protein resides in the cytoplasm. The protein localises to the cell membrane. It is found in the nucleus. Binds specifically to phosphatidylinositol 3,4-diphosphate (PtdIns3,4P2), but not to other phosphoinositides. May recruit other proteins to the plasma membrane. The polypeptide is Pleckstrin homology domain-containing family A member 2 (Plekha2) (Mus musculus (Mouse)).